Consider the following 347-residue polypeptide: Phenylalanine--tRNA ligase alpha subunit (347 aa).

Residue glutamate 259 coordinates Mg(2+).

Belongs to the class-II aminoacyl-tRNA synthetase family. Phe-tRNA synthetase alpha subunit type 1 subfamily. As to quaternary structure, tetramer of two alpha and two beta subunits. Requires Mg(2+) as cofactor.

It is found in the cytoplasm. It carries out the reaction tRNA(Phe) + L-phenylalanine + ATP = L-phenylalanyl-tRNA(Phe) + AMP + diphosphate + H(+). In Oenococcus oeni (strain ATCC BAA-331 / PSU-1), this protein is Phenylalanine--tRNA ligase alpha subunit.